The following is a 127-amino-acid chain: Glycine cleavage system H protein (127 aa).

The Lipoyl-binding domain occupies 24 to 106 (TATIGITDYA…YAEGWMLKLK (83 aa)). K65 is modified (N6-lipoyllysine).

It belongs to the GcvH family. The glycine cleavage system is composed of four proteins: P, T, L and H. (R)-lipoate serves as cofactor.

Functionally, the glycine cleavage system catalyzes the degradation of glycine. The H protein shuttles the methylamine group of glycine from the P protein to the T protein. This chain is Glycine cleavage system H protein, found in Opitutus terrae (strain DSM 11246 / JCM 15787 / PB90-1).